A 448-amino-acid chain; its full sequence is Asparagine--tRNA ligase (448 aa).

The protein belongs to the class-II aminoacyl-tRNA synthetase family. As to quaternary structure, homodimer.

Its subcellular location is the cytoplasm. The enzyme catalyses tRNA(Asn) + L-asparagine + ATP = L-asparaginyl-tRNA(Asn) + AMP + diphosphate + H(+). The protein is Asparagine--tRNA ligase of Streptococcus thermophilus (strain ATCC BAA-250 / LMG 18311).